Consider the following 185-residue polypeptide: Ribosome-recycling factor (185 aa).

The protein belongs to the RRF family.

It localises to the cytoplasm. Functionally, responsible for the release of ribosomes from messenger RNA at the termination of protein biosynthesis. May increase the efficiency of translation by recycling ribosomes from one round of translation to another. This is Ribosome-recycling factor from Beutenbergia cavernae (strain ATCC BAA-8 / DSM 12333 / CCUG 43141 / JCM 11478 / NBRC 16432 / NCIMB 13614 / HKI 0122).